The chain runs to 547 residues: Chaperonin GroEL (547 aa).

ATP contacts are provided by residues Thr30 to Pro33, Lys51, Asp87 to Thr91, Gly415, and Asp496. Residues Ser527 to Phe547 are disordered. Over residues Gly537–Phe547 the composition is skewed to gly residues.

It belongs to the chaperonin (HSP60) family. As to quaternary structure, forms a cylinder of 14 subunits composed of two heptameric rings stacked back-to-back. Interacts with the co-chaperonin GroES.

Its subcellular location is the cytoplasm. The catalysed reaction is ATP + H2O + a folded polypeptide = ADP + phosphate + an unfolded polypeptide.. In terms of biological role, together with its co-chaperonin GroES, plays an essential role in assisting protein folding. The GroEL-GroES system forms a nano-cage that allows encapsulation of the non-native substrate proteins and provides a physical environment optimized to promote and accelerate protein folding. This chain is Chaperonin GroEL, found in Rickettsia africae (strain ESF-5).